The chain runs to 351 residues: DNA polymerase IV (351 aa).

The 182-residue stretch at 4-185 folds into the UmuC domain; the sequence is IIHVDMDCFY…LPLGKIPGVG (182 aa). Positions 8 and 103 each coordinate Mg(2+). The active site involves Glu-104.

Belongs to the DNA polymerase type-Y family. In terms of assembly, monomer. Mg(2+) is required as a cofactor.

The protein localises to the cytoplasm. The enzyme catalyses DNA(n) + a 2'-deoxyribonucleoside 5'-triphosphate = DNA(n+1) + diphosphate. Poorly processive, error-prone DNA polymerase involved in untargeted mutagenesis. Copies undamaged DNA at stalled replication forks, which arise in vivo from mismatched or misaligned primer ends. These misaligned primers can be extended by PolIV. Exhibits no 3'-5' exonuclease (proofreading) activity. May be involved in translesional synthesis, in conjunction with the beta clamp from PolIII. The protein is DNA polymerase IV of Citrobacter koseri (strain ATCC BAA-895 / CDC 4225-83 / SGSC4696).